The following is a 268-amino-acid chain: Interleukin-1 alpha (268 aa).

The propeptide occupies M1–R112. Residue K82 is modified to N6-acetyllysine. The nuclear localization signal (NLS) stretch occupies residues K82–L86. S87 is modified (phosphoserine). N102 and N141 each carry an N-linked (GlcNAc...) asparagine glycan.

This sequence belongs to the IL-1 family. Monomer. Interacts with TMED10; the interaction mediates the translocation from the cytoplasm into the ERGIC (endoplasmic reticulum-Golgi intermediate compartment) and thereby secretion. Interacts with IL1R1. Interacts with S100A13; this interaction is the first step in the export of IL1A, followed by direct translocation of this complex across the plasma membrane. Acetylated within its nuclear localization sequence, which impacts subcellular localization. In terms of processing, proteolytic processed by CAPN1 in a calcium-dependent manner. Cleavage from 31 kDa precursor to 18 kDa biologically active molecules. Post-translationally, phosphorylated. Phosphorylation greatly enhances susceptibility to digestion and promotes the conversion of pre-IL1A alpha to the biologically active IL1A.

It is found in the nucleus. The protein resides in the cytoplasm. Its subcellular location is the secreted. In terms of biological role, cytokine constitutively present intracellularly in nearly all resting non-hematopoietic cells that plays an important role in inflammation and bridges the innate and adaptive immune systems. After binding to its receptor IL1R1 together with its accessory protein IL1RAP, forms the high affinity interleukin-1 receptor complex. Signaling involves the recruitment of adapter molecules such as MYD88, IRAK1 or IRAK4. In turn, mediates the activation of NF-kappa-B and the three MAPK pathways p38, p42/p44 and JNK pathways. Within the cell, acts as an alarmin and cell death results in its liberation in the extracellular space after disruption of the cell membrane to induce inflammation and alert the host to injury or damage. In addition to its role as a danger signal, which occurs when the cytokine is passively released by cell necrosis, directly senses DNA damage and acts as signal for genotoxic stress without loss of cell integrity. This is Interleukin-1 alpha (IL1A) from Lama glama (Llama).